Consider the following 162-residue polypeptide: Putative 4-hydroxy-4-methyl-2-oxoglutarate aldolase (162 aa).

Residues 75 to 78 and arginine 97 contribute to the substrate site; that span reads GDML. Aspartate 98 is a binding site for a divalent metal cation.

Belongs to the class II aldolase/RraA-like family. As to quaternary structure, homotrimer. A divalent metal cation is required as a cofactor.

It carries out the reaction 4-hydroxy-4-methyl-2-oxoglutarate = 2 pyruvate. It catalyses the reaction oxaloacetate + H(+) = pyruvate + CO2. Functionally, catalyzes the aldol cleavage of 4-hydroxy-4-methyl-2-oxoglutarate (HMG) into 2 molecules of pyruvate. Also contains a secondary oxaloacetate (OAA) decarboxylase activity due to the common pyruvate enolate transition state formed following C-C bond cleavage in the retro-aldol and decarboxylation reactions. The polypeptide is Putative 4-hydroxy-4-methyl-2-oxoglutarate aldolase (Stutzerimonas stutzeri (strain A1501) (Pseudomonas stutzeri)).